The primary structure comprises 629 residues: tRNA uridine 5-carboxymethylaminomethyl modification enzyme MnmG (629 aa).

13-18 (GGGHAG) contributes to the FAD binding site. An NAD(+)-binding site is contributed by 273–287 (GPRYCPSIEDKIHRF).

It belongs to the MnmG family. Homodimer. Heterotetramer of two MnmE and two MnmG subunits. FAD serves as cofactor.

Its subcellular location is the cytoplasm. NAD-binding protein involved in the addition of a carboxymethylaminomethyl (cmnm) group at the wobble position (U34) of certain tRNAs, forming tRNA-cmnm(5)s(2)U34. The sequence is that of tRNA uridine 5-carboxymethylaminomethyl modification enzyme MnmG from Shewanella baltica (strain OS185).